The sequence spans 80 residues: Small ribosomal subunit protein bS18 (80 aa).

This sequence belongs to the bacterial ribosomal protein bS18 family. In terms of assembly, part of the 30S ribosomal subunit. Forms a tight heterodimer with protein bS6.

Binds as a heterodimer with protein bS6 to the central domain of the 16S rRNA, where it helps stabilize the platform of the 30S subunit. This Clostridium botulinum (strain 657 / Type Ba4) protein is Small ribosomal subunit protein bS18.